Consider the following 515-residue polypeptide: Histidine ammonia-lyase (515 aa).

Residues Ala-142–Gly-144 constitute a cross-link (5-imidazolinone (Ala-Gly)). Ser-143 is modified (2,3-didehydroalanine (Ser)).

The protein belongs to the PAL/histidase family. Contains an active site 4-methylidene-imidazol-5-one (MIO), which is formed autocatalytically by cyclization and dehydration of residues Ala-Ser-Gly.

The protein localises to the cytoplasm. The catalysed reaction is L-histidine = trans-urocanate + NH4(+). Its pathway is amino-acid degradation; L-histidine degradation into L-glutamate; N-formimidoyl-L-glutamate from L-histidine: step 1/3. This is Histidine ammonia-lyase from Methylobacterium nodulans (strain LMG 21967 / CNCM I-2342 / ORS 2060).